A 267-amino-acid polypeptide reads, in one-letter code: MEPHLLMLGFLSFTIVPGCWAELCLYDPPEVPNATFKALSYKNGTILNCECKRGFRRLNELVYMACLGNSWSNNCQCTSNSHDNSREQVTPQPEGQKEQQTTDTQKSTQSVYQENLAGHCREPPPWRHEDTKRIYHFVEGQIVLYTCIQGYKALQRGPAISICKTVCGEIRWTHPQLTCVDEKEHHQFLASEESQGSRNSFPESEASCPTPNTDFSQLTEATTTMETFVFTKEYQVAVASCIFLLLSILLLSGFTWQHRWRKSRRTI.

The signal sequence occupies residues 1–21; sequence MEPHLLMLGFLSFTIVPGCWA. Residues 22–79 form the Sushi 1 domain; the sequence is ELCLYDPPEVPNATFKALSYKNGTILNCECKRGFRRLNELVYMACLGNSWSNNCQCTS. Residues 22 to 235 lie on the Extracellular side of the membrane; it reads ELCLYDPPEV…ETFVFTKEYQ (214 aa). 3 cysteine pairs are disulfide-bonded: C24-C66, C49-C75, and C51-C77. N33 and N43 each carry an N-linked (GlcNAc...) asparagine glycan. Polar residues predominate over residues 82-93; it reads HDNSREQVTPQP. A disordered region spans residues 82–108; sequence HDNSREQVTPQPEGQKEQQTTDTQKST. Residues 98–108 show a composition bias toward low complexity; that stretch reads EQQTTDTQKST. In terms of domain architecture, Sushi 2 spans 118–181; the sequence is GHCREPPPWR…WTHPQLTCVD (64 aa). Intrachain disulfides connect C120–C163 and C147–C179. Positions 191-215 are disordered; the sequence is SEESQGSRNSFPESEASCPTPNTDF. Polar residues predominate over residues 192-215; sequence EESQGSRNSFPESEASCPTPNTDF. Residues 236 to 256 form a helical membrane-spanning segment; it reads VAVASCIFLLLSILLLSGFTW. At 257–267 the chain is on the cytoplasmic side; it reads QHRWRKSRRTI.

In terms of assembly, non-covalent dimer of an alpha and a beta subunit. IL2R exists in 3 different forms: a high affinity dimer, an intermediate affinity monomer (beta subunit), and a low affinity monomer (alpha subunit). The high and intermediate affinity forms also associate with a gamma subunit.

The protein localises to the membrane. Functionally, receptor for interleukin-2. The receptor is involved in the regulation of immune tolerance by controlling regulatory T cells (TREGs) activity. TREGs suppress the activation and expansion of autoreactive T-cells. This Rattus norvegicus (Rat) protein is Interleukin-2 receptor subunit alpha (Il2ra).